Here is a 154-residue protein sequence, read N- to C-terminus: Hexachlorocyclohexane dehydrochlorinase 1 (154 aa).

Residue aspartate 25 is part of the active site. Residue histidine 73 is the Proton acceptor of the active site.

Belongs to the HCH dehydrochlorinase family. In terms of assembly, homotrimer.

The protein resides in the periplasm. It catalyses the reaction gamma-hexachlorocyclohexane = (3R,4S,5S,6R)-pentachlorocyclohexene + chloride + H(+). The enzyme catalyses (3R,4S,5S,6R)-pentachlorocyclohexene = (3R,6R)-1,3,4,6-tetrachlorocyclohexa-1,4-diene + chloride + H(+). Its pathway is xenobiotic degradation; hexachlorocyclohexane degradation. Catalyzes the conversion of the important environmental pollutant gamma-hexachlorocyclohexane (gamma-HCH or lindane) to 1,3,4,6-tetrachloro-1,4-cyclohexadiene (1,4-TCDN) via gamma-pentachlorocyclohexene (gamma-PCCH). Proceeds by two successive 1,2-anti conformationally dependent dehydrochlorinations. Also shows activity with alpha- and delta-HCH, giving alpha- and delta-PCCH respectively, but not with the beta isomer. This Sphingobium indicum (strain DSM 16412 / CCM 7286 / MTCC 6364 / B90A) protein is Hexachlorocyclohexane dehydrochlorinase 1.